The sequence spans 525 residues: NGFI-A-binding protein 2 (525 aa).

Residues 1–22 (MHRAPSPTAEQPPGGGDSARRT) are disordered. Phosphoserine is present on Ser6. The NCD1 stretch occupies residues 35-113 (ALPRTLGELQ…REWATNPGLF (79 aa)). Residues 135–237 (GTRKGSMSNG…GGTGGGPDRL (103 aa)) form a disordered region. Phosphoserine occurs at positions 157, 159, 162, and 171. Residues 212–234 (AGGGVPEGTGAGGLAAGGTGGGP) show a composition bias toward gly residues. The NCD2 stretch occupies residues 267–356 (LLKLNKKLAR…SRQVARESTY (90 aa)). A necessary for nuclear localization region spans residues 353 to 384 (ESTYLSSLKGSRLHPEELGGPPLKKLKQEVGE). Lys379 is covalently cross-linked (Glycyl lysine isopeptide (Lys-Gly) (interchain with G-Cter in SUMO1)). A disordered region spans residues 380–416 (QEVGEQSHPEIQQPPPGPESYVPPYRPSLEEDSASLS). A Phosphoserine modification is found at Ser479. The segment at 502 to 525 (PGPHPALVEGRRSSVKVEAEASRQ) is disordered. Over residues 510-525 (EGRRSSVKVEAEASRQ) the composition is skewed to basic and acidic residues. Lys517 is covalently cross-linked (Glycyl lysine isopeptide (Lys-Gly) (interchain with G-Cter in SUMO1); alternate). Residue Lys517 forms a Glycyl lysine isopeptide (Lys-Gly) (interchain with G-Cter in SUMO2); alternate linkage.

Belongs to the NAB family. As to quaternary structure, homomultimers may associate with EGR1 bound to DNA. In terms of processing, sumoylation by EGR2 represses EGR2 transcriptional activity in hindbrain. As to expression, widely expressed at low levels. Highly expressed in melanoma cell lines.

Its subcellular location is the nucleus. Acts as a transcriptional repressor for zinc finger transcription factors EGR1 and EGR2. Isoform 2 lacks repression ability. The chain is NGFI-A-binding protein 2 (NAB2) from Homo sapiens (Human).